A 335-amino-acid polypeptide reads, in one-letter code: Beta-ketoacyl-[acyl-carrier-protein] synthase III (335 aa).

Active-site residues include Cys-119 and His-261. An ACP-binding region spans residues 262–266; it reads QANQR. The active site involves Asn-291.

It belongs to the thiolase-like superfamily. FabH family. As to quaternary structure, homodimer.

It localises to the cytoplasm. It catalyses the reaction malonyl-[ACP] + acetyl-CoA + H(+) = 3-oxobutanoyl-[ACP] + CO2 + CoA. It participates in lipid metabolism; fatty acid biosynthesis. In terms of biological role, catalyzes the condensation reaction of fatty acid synthesis by the addition to an acyl acceptor of two carbons from malonyl-ACP. Catalyzes the first condensation reaction which initiates fatty acid synthesis and may therefore play a role in governing the total rate of fatty acid production. Possesses both acetoacetyl-ACP synthase and acetyl transacylase activities. Its substrate specificity determines the biosynthesis of branched-chain and/or straight-chain of fatty acids. This is Beta-ketoacyl-[acyl-carrier-protein] synthase III from Prochlorococcus marinus (strain MIT 9515).